The following is a 439-amino-acid chain: UDP-N-acetylglucosamine--N-acetylmuramyl-(pentapeptide) pyrophosphoryl-undecaprenol N-acetylglucosamine transferase (439 aa).

UDP-N-acetyl-alpha-D-glucosamine-binding positions include 25–27, arginine 218, serine 248, and glutamine 362; that span reads TGG.

Belongs to the glycosyltransferase 28 family. MurG subfamily.

It localises to the cell membrane. The catalysed reaction is di-trans,octa-cis-undecaprenyl diphospho-N-acetyl-alpha-D-muramoyl-L-alanyl-D-glutamyl-meso-2,6-diaminopimeloyl-D-alanyl-D-alanine + UDP-N-acetyl-alpha-D-glucosamine = di-trans,octa-cis-undecaprenyl diphospho-[N-acetyl-alpha-D-glucosaminyl-(1-&gt;4)]-N-acetyl-alpha-D-muramoyl-L-alanyl-D-glutamyl-meso-2,6-diaminopimeloyl-D-alanyl-D-alanine + UDP + H(+). It participates in cell wall biogenesis; peptidoglycan biosynthesis. Its function is as follows. Cell wall formation. Catalyzes the transfer of a GlcNAc subunit on undecaprenyl-pyrophosphoryl-MurNAc-pentapeptide (lipid intermediate I) to form undecaprenyl-pyrophosphoryl-MurNAc-(pentapeptide)GlcNAc (lipid intermediate II). In Roseiflexus sp. (strain RS-1), this protein is UDP-N-acetylglucosamine--N-acetylmuramyl-(pentapeptide) pyrophosphoryl-undecaprenol N-acetylglucosamine transferase.